Consider the following 417-residue polypeptide: Calreticulin (417 aa).

The signal sequence occupies residues 1–17 (MLLSVPLLLGLLGLAAA). The segment at 18-197 (EPAVYFKEQF…NSQVESGSLE (180 aa)) is N-domain. Glutamine 26 is a Ca(2+) binding site. Lysine 48 bears the N6-acetyllysine mark. Lysine 62 and lysine 64 together coordinate Ca(2+). A disulfide bridge connects residues cysteine 105 and cysteine 137. An alpha-D-glucoside-binding residues include tyrosine 109, lysine 111, tyrosine 128, and aspartate 135. Position 159 is an N6-acetyllysine (lysine 159). The 1-1 repeat unit spans residues 191 to 202 (VESGSLEDDWDF). The segment at 191–255 (VESGSLEDDW…DAKKPEDWDE (65 aa)) is 4 X approximate repeats. Residues 193 to 278 (SGSLEDDWDF…PEYKGEWKPR (86 aa)) are disordered. The tract at residues 198–308 (DDWDFLPPKK…YSPDPSIYAY (111 aa)) is P-domain. Residues 207 to 251 (KIKDPDASKPEDWDERAKIDDPTDSKPEDWDKPEHIPDPDAKKPE) are compositionally biased toward basic and acidic residues. The residue at position 209 (lysine 209) is an N6-acetyllysine. A run of 6 repeats spans residues 210-221 (DPDASKPEDWDE), 227-238 (DPTDSKPEDWDK), 244-255 (DPDAKKPEDWDE), 259-269 (GEWEPPVIQNP), 273-283 (GEWKPRQIDNP), and 287-297 (GTWIHPEIDNP). The interaction with PPIB stretch occupies residues 237 to 270 (DKPEHIPDPDAKKPEDWDEEMDGEWEPPVIQNPE). A compositionally biased stretch (acidic residues) spans 252-261 (DWDEEMDGEW). A 3 X approximate repeats region spans residues 259–297 (GEWEPPVIQNPEYKGEWKPRQIDNPDYKGTWIHPEIDNP). The C-domain stretch occupies residues 309-417 (DNFGVLGLDL…DVPGQAKDEL (109 aa)). Aspartate 317 provides a ligand contact to an alpha-D-glucoside. Aspartate 328 is a Ca(2+) binding site. The segment at 350–417 (TKAAEKQMKD…DVPGQAKDEL (68 aa)) is disordered. The span at 352-379 (AAEKQMKDKQDEEQRLKEEEEDKKRKEE) shows a compositional bias: basic and acidic residues. A compositionally biased stretch (acidic residues) spans 380 to 409 (EEAEDKEDDEDKDEDEEDEEDKEEDEEEDV). The Prevents secretion from ER motif lies at 414-417 (KDEL).

It belongs to the calreticulin family. Monomer. Component of an EIF2 complex at least composed of CELF1/CUGBP1, CALR, CALR3, EIF2S1, EIF2S2, HSP90B1 and HSPA5. Interacts with PDIA3/ERp57 and SPACA9. Interacts with TRIM21. Interacts with NR3C1. Interacts with PPIB. Interacts (via P-domain) with PDIA5. Interacts with GABARAP. Interacts with CLCC1.

It localises to the endoplasmic reticulum lumen. The protein resides in the cytoplasm. It is found in the cytosol. Its subcellular location is the secreted. The protein localises to the extracellular space. It localises to the extracellular matrix. The protein resides in the cell surface. It is found in the sarcoplasmic reticulum lumen. Its subcellular location is the cytoplasmic vesicle. The protein localises to the secretory vesicle. It localises to the cortical granule. The protein resides in the cytoplasmic granule. In terms of biological role, calcium-binding chaperone that promotes folding, oligomeric assembly and quality control in the endoplasmic reticulum (ER) via the calreticulin/calnexin cycle. This lectin interacts transiently with almost all of the monoglucosylated glycoproteins that are synthesized in the ER. Interacts with the DNA-binding domain of NR3C1 and mediates its nuclear export. Involved in maternal gene expression regulation. May participate in oocyte maturation via the regulation of calcium homeostasis. This Chlorocebus aethiops (Green monkey) protein is Calreticulin (CALR).